Reading from the N-terminus, the 695-residue chain is Potassium voltage-gated channel subfamily KQT member 4 (695 aa).

Residues 1 to 21 (MAEAPPRRLGLGPPPGDAPRA) form a disordered region. The Cytoplasmic portion of the chain corresponds to 1 to 96 (MAEAPPRRLG…VYNVLERPRG (96 aa)). Arg93 is an a 1,2-diacyl-sn-glycero-3-phospho-(1D-myo-inositol-4,5-bisphosphate) binding site. A helical membrane pass occupies residues 97 to 118 (WAFVYHVFIFLLVFSCLVLSVL). Residues 119-129 (STIQEHQELAN) lie on the Extracellular side of the membrane. The helical transmembrane segment at 130–152 (ECLLILEFVMIVVFGLEYIIRVW) threads the bilayer. The Cytoplasmic portion of the chain corresponds to 153-168 (SAGCCCRYRGWQGRFR). A helical transmembrane segment spans residues 169-191 (FARKPFCVIDFIVFVASVAVIAA). A 1,2-diacyl-sn-glycero-3-phospho-(1D-myo-inositol-4,5-bisphosphate) is bound at residue Lys172. The Extracellular segment spans residues 192–202 (GTQGNIFATSA). The chain crosses the membrane as a helical; Voltage-sensor span at residues 203 to 223 (LRSMRFLQILRMVRMDRRGGT). Residues Arg219, Arg220, Lys225, and Ser235 each coordinate a 1,2-diacyl-sn-glycero-3-phospho-(1D-myo-inositol-4,5-bisphosphate). Topologically, residues 224–235 (WKLLGSVVYAHS) are cytoplasmic. A helical transmembrane segment spans residues 236–258 (KELITAWYIGFLVLIFASFLVYL). Over 259–270 (AEKDANSDFSSY) the chain is Extracellular. Residues 271–292 (ADSLWWGTITLTTIGYGDKTPH) constitute an intramembrane region (pore-forming). A topological domain (extracellular) is located at residue Thr293. A helical membrane pass occupies residues 294-322 (WLGRVLAAGFALLGISFFALPAGILGSGF). The Cytoplasmic portion of the chain corresponds to 323–695 (ALKVQEQHRQ…ISRSVSTNMD (373 aa)). A 1,2-diacyl-sn-glycero-3-phospho-(1D-myo-inositol-4,5-bisphosphate)-binding residues include His330 and Lys333. An interaction with CALM region spans residues 342 to 351 (AANLIQAAWR). The disordered stretch occupies residues 441–483 (RMSSSQKRTGPSKQHLAPPPIPTSPSSEQVGEASSPSKVQKSW). Composition is skewed to polar residues over residues 442–452 (MSSSQKRTGPS) and 464–483 (SPSS…QKSW). The segment at 535 to 549 (RSVRILKFLVAKRKF) is interaction with CALM. Residues 546-650 (KRKFKETLRP…SRCLRSGTSA (105 aa)) form a C-terminal assembly domain (tetramerization) region. A disordered region spans residues 588–608 (GRGPGDRKTREKGDKGPSDTE). Residues 591-605 (PGDRKTREKGDKGPS) are compositionally biased toward basic and acidic residues.

This sequence belongs to the potassium channel family. KQT (TC 1.A.1.15) subfamily. Kv7.4/KCNQ4 sub-subfamily. In terms of assembly, homotetramer. Interacts (via C-terminus) with calmodulin; forms a heterooctameric structure (with 4:4 KCNQ1:CALM stoichiometry); the interaction is calcium-independent, constitutive, participates in the proper assembly of a functional channel. The interaction with calcium-free CALM controls channel trafficking whereas interaction with calcium-bound CALM regulates channel gating. May form a functional heteromultimeric channel with KCNQ3. Interacts with HSP90AB1; promotes cell surface expression of KCNQ4. As to expression, expressed in both the inner (IHCs) and the outer hair cells (OHCs) of the cochlea. Reciprocal longitudinal gradients of expression is present in IHCs and OHCs. The strongest expression in IHCs is in the base of the cochlea and in the apex for OHCs. A basal to apical gradient of expression is also present in both type I and type II spiral ganglion cells.

Its subcellular location is the basal cell membrane. The catalysed reaction is K(+)(in) = K(+)(out). Two molecules of phosphatidylinositol-4,5-bisphosphate (PIP2-I and PIP2-II) are essential to activate KCNQ4 channel by inducing the coupling of the voltage-sensing domain (VSD) and the pore-forming domain (PD). Upon channel activation, PIP2-I and PIP2-II disrupt the VSD-calmodulin/CALM interaction, causing the release of CALM from the VSD which triggers the opening of the gate. Calcium suppresses KCNQ4 channel current through calcium-bound CALM C-terminus. Therefore CALM acts as calcium sensor that controls channel activity. Pore-forming subunit of the voltage-gated potassium (Kv) channel involved in the regulation of sensory cells excitability in the cochlea. KCNQ4/Kv7.4 channel is composed of 4 pore-forming subunits assembled as tetramers. Promotes the outflow of potassium ions in the repolarization phase of action potential which plays a role in regulating membrane potential of excitable cells. The channel conducts a slowly activating and deactivating current. Current often shows some inward rectification at positive potentials. Channel may be selectively permeable in vitro to other cations besides potassium, in decreasing order of affinity K(+) = Rb(+) &gt; Cs(+) &gt; Na(+). Important for normal physiological function of inner ear such as sensory perception of sound. The chain is Potassium voltage-gated channel subfamily KQT member 4 from Rattus norvegicus (Rat).